A 618-amino-acid chain; its full sequence is uncharacterized protein (618 aa).

Residues 1–45 form a disordered region; the sequence is MSSKSASKLKREAKKAERLAAKGESVKPSKKNGTKNGKDKEVDGV. Basic and acidic residues-rich tracts occupy residues 14–27 and 36–45; these read KKAERLAAKGESVK and NGKDKEVDGV. Phosphoserine occurs at positions 50 and 53. Position 54 is a phosphothreonine (threonine 54). 2 positions are modified to phosphoserine: serine 55 and serine 64. 2 consecutive ABC transporter domains span residues 76-325 and 388-609; these read IKID…LKQQ and IAFN…QSRD. ATP-binding positions include 108–115 and 423–430; these read GDNGSGKS and GKNGTGKS.

The protein belongs to the ABC transporter superfamily.

The protein localises to the cytoplasm. This is an uncharacterized protein from Schizosaccharomyces pombe (strain 972 / ATCC 24843) (Fission yeast).